The chain runs to 74 residues: Exodeoxyribonuclease 7 small subunit (74 aa).

This sequence belongs to the XseB family. As to quaternary structure, heterooligomer composed of large and small subunits.

The protein resides in the cytoplasm. The enzyme catalyses Exonucleolytic cleavage in either 5'- to 3'- or 3'- to 5'-direction to yield nucleoside 5'-phosphates.. Functionally, bidirectionally degrades single-stranded DNA into large acid-insoluble oligonucleotides, which are then degraded further into small acid-soluble oligonucleotides. This Actinobacillus pleuropneumoniae serotype 5b (strain L20) protein is Exodeoxyribonuclease 7 small subunit.